The following is a 62-amino-acid chain: Synergistic-type venom protein S2C4 (62 aa).

Cystine bridges form between cysteine 3–cysteine 24, cysteine 17–cysteine 42, and cysteine 46–cysteine 57.

The protein belongs to the three-finger toxin family. Short-chain subfamily. Aminergic toxin sub-subfamily. As to quaternary structure, homodimer; disulfide-linked. Expressed by the venom gland.

The protein resides in the secreted. In terms of biological role, this protein shows a synergetic toxic effect in that it enhances the toxicity of other toxins. The polypeptide is Synergistic-type venom protein S2C4 (Dendroaspis jamesoni kaimosae (Eastern Jameson's mamba)).